A 213-amino-acid chain; its full sequence is 5''-phosphoribostamycin phosphatase (213 aa).

Residue H8 is the Tele-phosphohistidine intermediate of the active site. The active site involves H155.

It belongs to the histidine phosphatase superfamily.

The catalysed reaction is 5''-phosphoribostamycin + H2O = ribostamycin + phosphate. The protein operates within antibiotic biosynthesis; butirosin biosynthesis. In terms of biological role, catalyzes dephosphorylation of 5''-phosphoribostamycin to generate ribostamycinin the biosynthetic pathway of butirosin. The sequence is that of 5''-phosphoribostamycin phosphatase (btrP) from Niallia circulans (Bacillus circulans).